The chain runs to 141 residues: Large ribosomal subunit protein uL16 (141 aa).

The protein belongs to the universal ribosomal protein uL16 family. Part of the 50S ribosomal subunit.

In terms of biological role, binds 23S rRNA and is also seen to make contacts with the A and possibly P site tRNAs. The protein is Large ribosomal subunit protein uL16 of Sulfurimonas denitrificans (strain ATCC 33889 / DSM 1251) (Thiomicrospira denitrificans (strain ATCC 33889 / DSM 1251)).